The sequence spans 406 residues: MPPKKAPAGPSKKTEQKKKEKVIEDKTFGLKNKKGNKQQKFIQQVQKQVQAGGHHPRQDGDKKKDEKEKKLADLREMASIFKPVQTQKVDKGTDPKSVVCAFFKQGLCTKGDKCKFSHDLSLENKVEKRSMYVDMRDNEDDLMTNWDDAKLKEVVDKKHSEEKRRPTTEIICKFFLEAVEKSKYGWFWECPNGEKCIYRHALPPGYVLKRDKKKEDKPTEISLVDLIEKERAALGSNQTRVTLETFLAWKKRKLQEKKAKMVAEEERKKSDFSKGKQFGISGREMFSFNPDLVDDGPIEEGDAAFDVYKREDDDDDNAFEFKELDLAALSLAAKEVDGSGTIASSTRLLDQATEAAKTAAAEDGAASDDENPSSSAPANDAAPFNKDLFVDLAGELDDLDLDDEDD.

The segment covering Met-1–Ser-11 has biased composition (low complexity). Residues Met-1–Lys-70 are disordered. Over residues Lys-12–Phe-28 the composition is skewed to basic and acidic residues. Residues Gln-38–Gln-50 are compositionally biased toward low complexity. Residues Pro-56 to Lys-70 are compositionally biased toward basic and acidic residues. The stretch at Arg-57 to Lys-82 forms a coiled coil. 2 consecutive C3H1-type zinc fingers follow at residues Asp-94–Ser-121 and Pro-166–Pro-203. Positions Val-336 to Ala-382 are disordered. 2 stretches are compositionally biased toward low complexity: residues Ala-352 to Gly-364 and Pro-372 to Ala-382.

It belongs to the ZC3H15/TMA46 family.

This is Zinc finger CCCH domain-containing protein 15 homolog from Drosophila pseudoobscura pseudoobscura (Fruit fly).